Reading from the N-terminus, the 373-residue chain is ORC1-type DNA replication protein 2 (373 aa).

Residues 63-67 (TGKTS), Y205, and R217 each bind ATP.

The protein belongs to the CDC6/cdc18 family.

Its function is as follows. Involved in regulation of DNA replication. The sequence is that of ORC1-type DNA replication protein 2 (cdc6-2) from Methanosarcina acetivorans (strain ATCC 35395 / DSM 2834 / JCM 12185 / C2A).